A 203-amino-acid chain; its full sequence is Outer-membrane lipoprotein LolB (203 aa).

A signal peptide spans 1 to 20; it reads MNRSRRLALLCLGVPLLLQA. The N-palmitoyl cysteine moiety is linked to residue cysteine 21. The S-diacylglycerol cysteine moiety is linked to residue cysteine 21.

Belongs to the LolB family. Monomer.

The protein resides in the cell outer membrane. Functionally, plays a critical role in the incorporation of lipoproteins in the outer membrane after they are released by the LolA protein. The protein is Outer-membrane lipoprotein LolB of Cupriavidus taiwanensis (strain DSM 17343 / BCRC 17206 / CCUG 44338 / CIP 107171 / LMG 19424 / R1) (Ralstonia taiwanensis (strain LMG 19424)).